A 323-amino-acid chain; its full sequence is DNA-directed RNA polymerase subunit alpha 1 (323 aa).

An alpha N-terminal domain (alpha-NTD) region spans residues 1–228 (MSNNNSKLEF…EQISVFVSLR (228 aa)). Residues 244–323 (IDPILLKPID…DNFRELVEGK (80 aa)) form an alpha C-terminal domain (alpha-CTD) region.

It belongs to the RNA polymerase alpha chain family. Homodimer. The RNAP catalytic core consists of 2 alpha, 1 beta, 1 beta' and 1 omega subunit. When a sigma factor is associated with the core the holoenzyme is formed, which can initiate transcription.

It carries out the reaction RNA(n) + a ribonucleoside 5'-triphosphate = RNA(n+1) + diphosphate. Functionally, DNA-dependent RNA polymerase catalyzes the transcription of DNA into RNA using the four ribonucleoside triphosphates as substrates. The chain is DNA-directed RNA polymerase subunit alpha 1 from Francisella tularensis subsp. tularensis (strain FSC 198).